Consider the following 508-residue polypeptide: Transcription termination factor MTERF4, chloroplastic (508 aa).

Residues 1 to 79 constitute a chloroplast transit peptide; the sequence is MMKSLFLFSA…PSLLDMERGR (79 aa). Low complexity predominate over residues 28 to 49; the sequence is RLTASASTSASSPPRAGCSRGP. Disordered regions lie at residues 28-69 and 475-508; these read RLTA…LYAR and FDTN…EFIE. Positions 484 to 508 are enriched in acidic residues; the sequence is VEDEVEDEDLDEDSDYDSTDDEFIE.

This sequence belongs to the mTERF family.

The protein resides in the plastid. It localises to the chloroplast stroma. Functionally, transcription termination factor required for processing and steady-state levels of plastid transcripts. Required for splicing of the chloroplastic group II intron. Required for the accumulation of 16S and 23S ribosomes. In Oryza sativa subsp. japonica (Rice), this protein is Transcription termination factor MTERF4, chloroplastic.